An 864-amino-acid polypeptide reads, in one-letter code: DNA mismatch repair protein MutS (864 aa).

607-614 contacts ATP; sequence GPNMGGKS.

The protein belongs to the DNA mismatch repair MutS family.

Functionally, this protein is involved in the repair of mismatches in DNA. It is possible that it carries out the mismatch recognition step. This protein has a weak ATPase activity. The polypeptide is DNA mismatch repair protein MutS (Neisseria meningitidis serogroup A / serotype 4A (strain DSM 15465 / Z2491)).